Here is a 472-residue protein sequence, read N- to C-terminus: Lactate utilization protein B (472 aa).

2 consecutive 4Fe-4S ferredoxin-type domains span residues 304-334 (GTEF…GHSY) and 353-382 (YDDY…LHEL). [4Fe-4S] cluster is bound by residues Cys313, Cys316, Cys319, Cys323, Cys366, Cys369, and Cys373.

It belongs to the LutB/YkgF family.

Is involved in L-lactate degradation and allows cells to grow with lactate as the sole carbon source. Has probably a role as an electron transporter during oxidation of L-lactate. This is Lactate utilization protein B from Anoxybacillus flavithermus (strain DSM 21510 / WK1).